The primary structure comprises 105 residues: Iron-sulfur cluster assembly protein CyaY (105 aa).

The protein belongs to the frataxin family.

Involved in iron-sulfur (Fe-S) cluster assembly. May act as a regulator of Fe-S biogenesis. In Paraburkholderia phymatum (strain DSM 17167 / CIP 108236 / LMG 21445 / STM815) (Burkholderia phymatum), this protein is Iron-sulfur cluster assembly protein CyaY.